A 96-amino-acid chain; its full sequence is Small ribosomal subunit protein bS6 (96 aa).

It belongs to the bacterial ribosomal protein bS6 family.

In terms of biological role, binds together with bS18 to 16S ribosomal RNA. The protein is Small ribosomal subunit protein bS6 of Bacillus cereus (strain ATCC 10987 / NRS 248).